The following is a 156-amino-acid chain: Small ribosomal subunit protein uS7 (156 aa).

The protein belongs to the universal ribosomal protein uS7 family. Part of the 30S ribosomal subunit. Contacts proteins S9 and S11.

One of the primary rRNA binding proteins, it binds directly to 16S rRNA where it nucleates assembly of the head domain of the 30S subunit. Is located at the subunit interface close to the decoding center, probably blocks exit of the E-site tRNA. This Pseudomonas fluorescens (strain SBW25) protein is Small ribosomal subunit protein uS7.